The sequence spans 354 residues: Release factor glutamine methyltransferase (354 aa).

Residues 174–178, aspartate 197, and asparagine 241 each bind S-adenosyl-L-methionine; that span reads GSGSG. 241-244 serves as a coordination point for substrate; sequence NPPY.

The protein belongs to the protein N5-glutamine methyltransferase family. PrmC subfamily.

The catalysed reaction is L-glutaminyl-[peptide chain release factor] + S-adenosyl-L-methionine = N(5)-methyl-L-glutaminyl-[peptide chain release factor] + S-adenosyl-L-homocysteine + H(+). Its function is as follows. Methylates the class 1 translation termination release factors RF1/PrfA and RF2/PrfB on the glutamine residue of the universally conserved GGQ motif. The protein is Release factor glutamine methyltransferase of Fusobacterium nucleatum subsp. nucleatum (strain ATCC 25586 / DSM 15643 / BCRC 10681 / CIP 101130 / JCM 8532 / KCTC 2640 / LMG 13131 / VPI 4355).